The chain runs to 202 residues: Small ribosomal subunit protein uS2 (202 aa).

The protein belongs to the universal ribosomal protein uS2 family.

This is Small ribosomal subunit protein uS2 from Methanocorpusculum labreanum (strain ATCC 43576 / DSM 4855 / Z).